A 445-amino-acid polypeptide reads, in one-letter code: MSEMTLNAAEQPIDELVGWVKQHDFSLNLTTERLAFLIAIAVLSNERFDEELGEGELHDAFAIVTRLFDETGEASAFRANNAINEMVKQRLISRFVSEITDGASIYRLSPLAIGITDYYVRHREFSKLRLSIQLSMVADEMAKAIEAAQKGGTPGHWKKNVYGILKYSVGEIFDQIDLNQRVMDEQQQSVKQQIADLLNKDWREAINNCEALLSETSSTLRELQDTLQAASDELQTQILDIQEIVYGDPELEFIEEALFGLQMKLDRITSWGQQAIDLWIGYDRHVHKFIRTAIDMDKNRAFSSRLRQSVKDYFDSPWYLTYADAERLSDLRDEALVLRDDEVTGQVPMEVEYEEFQQVNDELAERIGDMLKAHKDQGAPIDLSVVLRDYLAQHPHTHHFDLARIVVDQAVRLGYSESDYQAVQPDWKAINEFGAKVQANVIDRY.

Positions 213–241 (LSETSSTLRELQDTLQAASDELQTQILDI) are leucine-zipper.

It belongs to the MukF family. As to quaternary structure, interacts, and probably forms a ternary complex, with MukE and MukB via its C-terminal region. The complex formation is stimulated by calcium or magnesium. It is required for an interaction between MukE and MukB.

The protein resides in the cytoplasm. It localises to the nucleoid. In terms of biological role, involved in chromosome condensation, segregation and cell cycle progression. May participate in facilitating chromosome segregation by condensation DNA from both sides of a centrally located replisome during cell division. Not required for mini-F plasmid partitioning. Probably acts via its interaction with MukB and MukE. Overexpression results in anucleate cells. It has a calcium binding activity. This is Chromosome partition protein MukF from Vibrio campbellii (strain ATCC BAA-1116).